Consider the following 382-residue polypeptide: Draxin-A (382 aa).

An N-terminal signal peptide occupies residues 1–22 (MMSSSWCLPLALLFSTLAVSHS). Disordered regions lie at residues 28 to 213 (THAK…PPSP), 233 to 252 (LPTLPPASTKPQKSGRGKMQ), and 275 to 297 (VDAWPSSRKKDKRRSKNLSSGNV). Low complexity predominate over residues 73–82 (RGAKASSGAG). The span at 139 to 149 (GPRKGRGQGHG) shows a compositional bias: basic residues. A compositionally biased stretch (low complexity) spans 190 to 201 (SVSSAAAATSPS). Over residues 281–290 (SRKKDKRRSK) the composition is skewed to basic residues. Residues N291 and N296 are each glycosylated (N-linked (GlcNAc...) asparagine).

The protein belongs to the draxin family.

The protein localises to the secreted. In terms of biological role, chemorepulsive axon guidance protein required for the development of spinal cord and forebrain commissures. Acts as a chemorepulsive guidance protein for commissural axons during development. Able to inhibit or repel neurite outgrowth from dorsal spinal cord. This Salmo salar (Atlantic salmon) protein is Draxin-A (draxin-A).